Reading from the N-terminus, the 72-residue chain is Translation initiation factor IF-1 (72 aa).

In terms of domain architecture, S1-like spans 1-72; it reads MAKDDVIEVE…TRGRITYRFK (72 aa).

The protein belongs to the IF-1 family. In terms of assembly, component of the 30S ribosomal translation pre-initiation complex which assembles on the 30S ribosome in the order IF-2 and IF-3, IF-1 and N-formylmethionyl-tRNA(fMet); mRNA recruitment can occur at any time during PIC assembly.

Its subcellular location is the cytoplasm. One of the essential components for the initiation of protein synthesis. Stabilizes the binding of IF-2 and IF-3 on the 30S subunit to which N-formylmethionyl-tRNA(fMet) subsequently binds. Helps modulate mRNA selection, yielding the 30S pre-initiation complex (PIC). Upon addition of the 50S ribosomal subunit IF-1, IF-2 and IF-3 are released leaving the mature 70S translation initiation complex. The protein is Translation initiation factor IF-1 of Streptococcus pneumoniae serotype 2 (strain D39 / NCTC 7466).